A 215-amino-acid polypeptide reads, in one-letter code: UPF0502 protein YceH (215 aa).

N6-acetyllysine is present on Lys80.

Belongs to the UPF0502 family.

The sequence is that of UPF0502 protein YceH from Escherichia coli O157:H7.